The primary structure comprises 94 residues: MGSELESAMETLINVFHAHSGQEGDKYKLSKKELKDLLQTELSGFLDVQKDADAVDKVMKELDENGDGEVDFKEYVVLVAALTVACNNFFWETS.

EF-hand domains lie at 13–48 (INVF…FLDV) and 50–85 (KDAD…LTVA). Residues K28, E33, D63, N65, D67, E69, and E74 each contribute to the Ca(2+) site. An S-nitrosocysteine modification is found at C86.

The protein belongs to the S-100 family. Dimer of either two alpha chains, or two beta chains, or one alpha and one beta chain. Also forms heterodimers with S100P. Interacts with AGER. Interacts with CAPZA1. Interacts with FKBP4. Interacts with RYR1 and RYR2. Interacts with CACYBP in a calcium-dependent manner. Interacts with PPP5C (via TPR repeats); the interaction is calcium-dependent and modulates PPP5C activity. Interacts with ATP2A2 and PLN in a Ca(2+)-dependent manner. Interacts with mitochondrial F1-ATPase subunits ATP5F1A and ATP5F1B; these interactions increase F1-ATPase activity. Post-translationally, glutathionylated; glutathionylation increases affinity to calcium about 10-fold. As to expression, expressed in the cardiac and the skeletal muscles.

It localises to the cytoplasm. It is found in the sarcoplasmic reticulum. Its subcellular location is the mitochondrion. Functionally, small calcium binding protein that plays important roles in several biological processes such as Ca(2+) homeostasis, chondrocyte biology and cardiomyocyte regulation. In response to an increase in intracellular Ca(2+) levels, binds calcium which triggers conformational changes. These changes allow interactions with specific target proteins and modulate their activity. Regulates a network in cardiomyocytes controlling sarcoplasmic reticulum Ca(2+) cycling and mitochondrial function through interaction with the ryanodine receptors RYR1 and RYR2, sarcoplasmic reticulum Ca(2+)-ATPase/ATP2A2 and mitochondrial F1-ATPase. Facilitates diastolic Ca(2+) dissociation and myofilament mechanics in order to improve relaxation during diastole. In Mus musculus (Mouse), this protein is Protein S100-A1 (S100a1).